Consider the following 328-residue polypeptide: 5,10-methylenetetrahydromethanopterin reductase (328 aa).

Belongs to the mer family.

It localises to the cytoplasm. It carries out the reaction 5-methyl-5,6,7,8-tetrahydromethanopterin + oxidized coenzyme F420-(gamma-L-Glu)(n) + H(+) = 5,10-methylenetetrahydromethanopterin + reduced coenzyme F420-(gamma-L-Glu)(n). It participates in one-carbon metabolism; methanogenesis from CO(2); methyl-coenzyme M from 5,10-methylene-5,6,7,8-tetrahydromethanopterin: step 1/2. Its function is as follows. Catalyzes the reversible reduction of methylene-H(4)MPT to methyl-H(4)MPT. The protein is 5,10-methylenetetrahydromethanopterin reductase of Methanosarcina barkeri (strain Fusaro / DSM 804).